A 230-amino-acid polypeptide reads, in one-letter code: E3 ubiquitin-protein ligase RNF114 (230 aa).

Residues 31-70 (CPVCLEVYEKPVQVPCGHVFCSACLQECLKPKKPVCGVCR) form an RING-type zinc finger. C93 and C96 together coordinate Zn(2+). A C2HC RNF-type zinc finger spans residues 93–112 (CHGCRKNFFLSKIRAHVATC). K104 carries the post-translational modification N6-acetyllysine. Zn(2+) contacts are provided by H108 and C112. The residue at position 114 (K114) is an N6-acetyllysine.

As to quaternary structure, interacts with XAF1, the interaction increases XAF1 stability and proapoptotic effects, and may regulate IFN signaling. Autoubiquitinated. Polyubiquitinated in the presence of E2 enzymes UBE2D1, UBE2D2 and UBE2D3, but only monoubiquitinated in the presence of UBE2E1.

The protein localises to the cytoplasm. The protein resides in the nucleus. It carries out the reaction S-ubiquitinyl-[E2 ubiquitin-conjugating enzyme]-L-cysteine + [acceptor protein]-L-lysine = [E2 ubiquitin-conjugating enzyme]-L-cysteine + N(6)-ubiquitinyl-[acceptor protein]-L-lysine.. It functions in the pathway protein modification; protein ubiquitination. E3 ubiquitin-protein ligase that promotes the ubiquitination of various substrates. In turn, participates in the regulation of many biological processes including cell cycle, apoptosis, osteoclastogenesis as well as innate or adaptive immunity. Acts as negative regulator of NF-kappa-B-dependent transcription by promoting the ubiquitination and stabilization of the NF-kappa-B inhibitor TNFAIP3. May promote the ubiquitination of TRAF6 as well. Also acts as a negative regulator of T-cell activation. Inhibits cellular dsRNA responses and interferon production by targeting MAVS component for proteasomal degradation. Ubiquitinates the CDK inhibitor CDKN1A leading to its degradationand probably also CDKN1B and CDKN1C. This activity stimulates cell cycle G1-to-S phase transition and suppresses cellular senescence. May play a role in spermatogenesis. The sequence is that of E3 ubiquitin-protein ligase RNF114 (RNF114) from Bos taurus (Bovine).